A 299-amino-acid chain; its full sequence is Nucleophosmin (299 aa).

Positions 125-134 (ESSDDEDEEH) are enriched in acidic residues. The tract at residues 125–247 (ESSDDEDEEH…TPKTPLSSEE (123 aa)) is disordered. The short motif at 153-158 (PRKKTR) is the Nuclear localization signal element. The span at 160 to 187 (EEEEEDSDEDDDDDEDDDDEDDDEEEEE) shows a compositional bias: acidic residues. Positions 188–197 (TPVKKTDSTK) are enriched in basic and acidic residues. Residues 189–195 (PVKKTDS) carry the Nuclear localization signal motif. 4 consecutive repeats follow at residues 218–220 (KTP), 221–223 (KTP), 237–239 (KTP), and 240–242 (KTP). Residues 218–242 (KTPKTPEQKGKQDTKPQTPKTPKTP) are 4 X 3 AA repeats of K-T-P. Over residues 221-231 (KTPEQKGKQDT) the composition is skewed to basic and acidic residues. The segment covering 232 to 242 (KPQTPKTPKTP) has biased composition (low complexity).

This sequence belongs to the nucleoplasmin family. As to quaternary structure, decamer formed by two pentameric rings associated in a head-to-head fashion. Phosphorylated.

It is found in the cytoplasm. Its subcellular location is the nucleus. It localises to the nucleoplasm. The protein resides in the nucleolus. In terms of biological role, acts as a chaperonin for the core histones H3, H2B and H4. Associated with nucleolar ribonucleoprotein structures and bind single-stranded nucleic acids. It may function in the assembly and/or transport of ribosome. May stimulate endonuclease activity on apurinic/apyrimidinic (AP) double-stranded DNA. May inhibit endonuclease activity on AP single-stranded RNA. The sequence is that of Nucleophosmin (npm1) from Xenopus laevis (African clawed frog).